Consider the following 176-residue polypeptide: ATP-dependent protease subunit HslV (176 aa).

Thr-5 is a catalytic residue. Na(+)-binding residues include Ala-161, Cys-164, and Thr-167.

It belongs to the peptidase T1B family. HslV subfamily. A double ring-shaped homohexamer of HslV is capped on each side by a ring-shaped HslU homohexamer. The assembly of the HslU/HslV complex is dependent on binding of ATP.

The protein resides in the cytoplasm. It catalyses the reaction ATP-dependent cleavage of peptide bonds with broad specificity.. Its activity is regulated as follows. Allosterically activated by HslU binding. Functionally, protease subunit of a proteasome-like degradation complex believed to be a general protein degrading machinery. In Caldicellulosiruptor saccharolyticus (strain ATCC 43494 / DSM 8903 / Tp8T 6331), this protein is ATP-dependent protease subunit HslV.